The primary structure comprises 532 residues: Tyrosine-protein kinase Src-1 (532 aa).

Residues 1 to 52 (MGATKSKPREGGPRSRSLDIVEGSHQPFTSLSASQTPNKSLDSHRPPAQPFG) form a disordered region. Gly-2 carries N-myristoyl glycine lipidation. Positions 7–19 (KPREGGPRSRSLD) are enriched in basic and acidic residues. The span at 26–40 (QPFTSLSASQTPNKS) shows a compositional bias: polar residues. Positions 80–141 (GGVTTFVALY…PSNYVAPSDS (62 aa)) constitute an SH3 domain. The 98-residue stretch at 147–244 (WYLGKITRRE…GLCHRLTTVC (98 aa)) folds into the SH2 domain. The 254-residue stretch at 266–519 (LRLELKLGQG…YLQAFLEDYF (254 aa)) folds into the Protein kinase domain. Residues 272 to 280 (LGQGCFGEV) and Lys-294 contribute to the ATP site. Asp-385 acts as the Proton acceptor in catalysis. A Phosphotyrosine; by autocatalysis modification is found at Tyr-415.

It belongs to the protein kinase superfamily. Tyr protein kinase family. SRC subfamily.

Its subcellular location is the cell membrane. It catalyses the reaction L-tyrosyl-[protein] + ATP = O-phospho-L-tyrosyl-[protein] + ADP + H(+). The polypeptide is Tyrosine-protein kinase Src-1 (src-a) (Xenopus laevis (African clawed frog)).